The chain runs to 150 residues: Transcriptional repressor NrdR (150 aa).

A zinc finger spans residues 3 to 34; the sequence is CPFCAFADSKVVDSRPDKEGSTIRRRRECESC. Residues 49–139 enclose the ATP-cone domain; that stretch reads PLVIKKDGRR…VYRSFKDITE (91 aa).

This sequence belongs to the NrdR family. The cofactor is Zn(2+).

Its function is as follows. Negatively regulates transcription of bacterial ribonucleotide reductase nrd genes and operons by binding to NrdR-boxes. The sequence is that of Transcriptional repressor NrdR from Geotalea daltonii (strain DSM 22248 / JCM 15807 / FRC-32) (Geobacter daltonii).